A 365-amino-acid chain; its full sequence is GDSL esterase/lipase At3g62280 (365 aa).

The signal sequence occupies residues 1–25 (MDYTVSSLQCFFLVLCLSLLVCSNS). Residue S43 is the Nucleophile of the active site. N-linked (GlcNAc...) asparagine glycosylation is found at N137, N178, and N231. Catalysis depends on residues D333 and H336.

Belongs to the 'GDSL' lipolytic enzyme family.

It is found in the secreted. This is GDSL esterase/lipase At3g62280 from Arabidopsis thaliana (Mouse-ear cress).